The sequence spans 470 residues: uncharacterized protein (470 aa).

Residues 1-24 (MKKLVGSLAAISVLSATGFSYVGY) form the signal peptide.

This is an uncharacterized protein from Mycoplasma capricolum subsp. capricolum (strain California kid / ATCC 27343 / NCTC 10154).